We begin with the raw amino-acid sequence, 190 residues long: ADP-ribosylation factor F (190 aa).

GTP-binding positions include 34-40, 75-79, and 136-139; these read DGAGKST, DIGGQ, and NKQD.

It belongs to the small GTPase superfamily. Arf family.

Its subcellular location is the golgi apparatus. In terms of biological role, GTP-binding protein that may be involved in protein trafficking. May modulate vesicle budding and uncoating within the Golgi apparatus. The chain is ADP-ribosylation factor F (arrF) from Dictyostelium discoideum (Social amoeba).